A 132-amino-acid chain; its full sequence is Female-specific protein 800 (132 aa).

Functionally, FS800 is likely to have some function in the production or maintenance of the schistosome egg. It may have a function unrelated to eggshell formation. This Schistosoma mansoni (Blood fluke) protein is Female-specific protein 800.